We begin with the raw amino-acid sequence, 98 residues long: uncharacterized protein (98 aa).

It belongs to the HesB/IscA family.

This is an uncharacterized protein from Staphylococcus aureus (strain MRSA252).